The chain runs to 260 residues: MEDVQSHAPQIPLNIDRVGVRELRLPLLVRDRTRGTQQTVASVDLGVDLPSEFKGTHMSRFVEALEQWNDEISYQSVRRLLQDIRQRLEARRAYARFCFPYFISKAAPASGSPALVSYQCRLTGELDDAGQHFILEVDVPVMTVCPCSKAISNEGAHSQRAMVRMRLRMKAFSWLEDFIDIAEASGSSAVYTLLKREDEKYVTEHAFAHPTFVEDVVRNVAQRLSEHGQVEWFSVEVESMESIHNHNAFARIERHISDRS.

Belongs to the GTP cyclohydrolase IV family.

The enzyme catalyses GTP + H2O = 7,8-dihydroneopterin 3'-triphosphate + formate + H(+). Its pathway is cofactor biosynthesis; 7,8-dihydroneopterin triphosphate biosynthesis; 7,8-dihydroneopterin triphosphate from GTP: step 1/1. Converts GTP to 7,8-dihydroneopterin triphosphate. The polypeptide is GTP cyclohydrolase FolE2 (Desulfovibrio desulfuricans (strain ATCC 27774 / DSM 6949 / MB)).